We begin with the raw amino-acid sequence, 783 residues long: RNA exonuclease 5 (783 aa).

The region spanning 230 to 378 is the Exonuclease domain; sequence LFGLDCEMCL…EDARTTLELA (149 aa). 2 RRM domains span residues 503–577 and 598–677; these read STVY…RPVT and GTIY…RHLH.

This chain is RNA exonuclease 5 (REXO5), found in Bos taurus (Bovine).